A 556-amino-acid chain; its full sequence is Glucose-6-phosphate isomerase (556 aa).

E360 functions as the Proton donor in the catalytic mechanism. Active-site residues include H391 and K519.

This sequence belongs to the GPI family.

The protein resides in the cytoplasm. The enzyme catalyses alpha-D-glucose 6-phosphate = beta-D-fructose 6-phosphate. Its pathway is carbohydrate biosynthesis; gluconeogenesis. It functions in the pathway carbohydrate degradation; glycolysis; D-glyceraldehyde 3-phosphate and glycerone phosphate from D-glucose: step 2/4. Catalyzes the reversible isomerization of glucose-6-phosphate to fructose-6-phosphate. This is Glucose-6-phosphate isomerase from Acinetobacter baumannii (strain AB0057).